Reading from the N-terminus, the 576-residue chain is Arginine--tRNA ligase (576 aa).

The short motif at 122–132 is the 'HIGH' region element; the sequence is PNVAKEMHVGH.

The protein belongs to the class-I aminoacyl-tRNA synthetase family. In terms of assembly, monomer.

It localises to the cytoplasm. The catalysed reaction is tRNA(Arg) + L-arginine + ATP = L-arginyl-tRNA(Arg) + AMP + diphosphate. The chain is Arginine--tRNA ligase from Mannheimia succiniciproducens (strain KCTC 0769BP / MBEL55E).